Consider the following 151-residue polypeptide: uncharacterized protein (151 aa).

The span at 40–57 (QMNRRNSENNTFDASNVG) shows a compositional bias: polar residues. The tract at residues 40–125 (QMNRRNSENN…KRQPHYAEPI (86 aa)) is disordered. The span at 83–110 (QRQNGRQHQHAGQQQPQHQHTQSQTRQT) shows a compositional bias: low complexity.

This is an uncharacterized protein from Bacillus subtilis (strain 168).